The primary structure comprises 212 residues: Large ribosomal subunit protein uL3 (212 aa).

The interval threonine 117 to arginine 142 is disordered.

It belongs to the universal ribosomal protein uL3 family. Part of the 50S ribosomal subunit. Forms a cluster with proteins L14 and L19.

Its function is as follows. One of the primary rRNA binding proteins, it binds directly near the 3'-end of the 23S rRNA, where it nucleates assembly of the 50S subunit. This Acholeplasma laidlawii (strain PG-8A) protein is Large ribosomal subunit protein uL3.